The chain runs to 314 residues: Lipoyl synthase (314 aa).

[4Fe-4S] cluster contacts are provided by C60, C65, C71, C86, C90, C93, and S300. Positions 72–289 (FRKGTATFMI…RQFGLSIGFS (218 aa)) constitute a Radical SAM core domain.

This sequence belongs to the radical SAM superfamily. Lipoyl synthase family. Requires [4Fe-4S] cluster as cofactor.

The protein resides in the cytoplasm. The catalysed reaction is [[Fe-S] cluster scaffold protein carrying a second [4Fe-4S](2+) cluster] + N(6)-octanoyl-L-lysyl-[protein] + 2 oxidized [2Fe-2S]-[ferredoxin] + 2 S-adenosyl-L-methionine + 4 H(+) = [[Fe-S] cluster scaffold protein] + N(6)-[(R)-dihydrolipoyl]-L-lysyl-[protein] + 4 Fe(3+) + 2 hydrogen sulfide + 2 5'-deoxyadenosine + 2 L-methionine + 2 reduced [2Fe-2S]-[ferredoxin]. Its pathway is protein modification; protein lipoylation via endogenous pathway; protein N(6)-(lipoyl)lysine from octanoyl-[acyl-carrier-protein]: step 2/2. In terms of biological role, catalyzes the radical-mediated insertion of two sulfur atoms into the C-6 and C-8 positions of the octanoyl moiety bound to the lipoyl domains of lipoate-dependent enzymes, thereby converting the octanoylated domains into lipoylated derivatives. This Pelobacter propionicus (strain DSM 2379 / NBRC 103807 / OttBd1) protein is Lipoyl synthase.